The chain runs to 153 residues: Ribosomal RNA large subunit methyltransferase H (153 aa).

Residues leucine 70, glycine 102, and 121–126 (LSSMTF) each bind S-adenosyl-L-methionine.

The protein belongs to the RNA methyltransferase RlmH family. As to quaternary structure, homodimer.

Its subcellular location is the cytoplasm. It carries out the reaction pseudouridine(1915) in 23S rRNA + S-adenosyl-L-methionine = N(3)-methylpseudouridine(1915) in 23S rRNA + S-adenosyl-L-homocysteine + H(+). Its function is as follows. Specifically methylates the pseudouridine at position 1915 (m3Psi1915) in 23S rRNA. The protein is Ribosomal RNA large subunit methyltransferase H of Dictyoglomus thermophilum (strain ATCC 35947 / DSM 3960 / H-6-12).